The primary structure comprises 824 residues: Dapper 1-B (824 aa).

3 disordered regions span residues 1–33, 131–150, and 515–534; these read MKPIPAAPEPLGQHQDSPRRKDKGEAESERQRT, EEHLETDSRPSSGFYELSDG, and HASSSFDERPPLDFKSEGSS. Positions 2–343 are interaction with tcf7l1-A; it reads KPIPAAPEPL…PVRTNKPRTS (342 aa). A compositionally biased stretch (basic and acidic residues) spans 16–33; the sequence is DSPRRKDKGEAESERQRT. The stretch at 84 to 139 forms a coiled coil; the sequence is EEKFLEDNILLLKKQLNCLRKRDAGLLSQLHELDKQINDLRIDVEKTEEHLETDSR. Positions 520-530 are enriched in basic and acidic residues; it reads FDERPPLDFKS. The PDZ-binding signature appears at 821–824; it reads MTTV.

It belongs to the dapper family. As to quaternary structure, interacts with dbf4 and tcf7l1-A. Interacts with dvl2/dsh; the interaction is required for dact1-b phosphorylation by CaMK1D and seems to become disrupted by the phosphorylation. In terms of processing, phosphorylated by CaMK1D; the phosphorylation requires binding to dvl2/dsh. Expressed both in the dorsal lip in early gastrula and throughout the posterior presumptive ectoderm in early neurula. Expressed in the dorsal neural folds at the tailbud stage and highly expressed in the tadpole head, including the brain, retina and cartilaginous branchial arch derivatives.

Its subcellular location is the cytoplasm. The protein localises to the nucleus. Its function is as follows. Involved in regulation of intracellular signaling pathways during development. Specifically thought to play a role in canonical and/or non-canonical Wnt signaling pathways through interaction with DSH (Dishevelled) family proteins. Binds to dvl2 to regulate the degradation of beta-catenin (ctnnb1-A and possibly ctnnb1-B), thereby modulating the transcriptional activation of target genes of the Wnt signaling pathway. Seems to promote beta-catenin degradation if not phosphorylated and to block beta-catenin degradation if phosphorylated by CaMK1D. Involved in regulation of catenin delta/ctnnd1 protein level. May also bind to and directly stimulate the activity of tcf7l1-A. Also regulates the activation by dvl2 of jnk, a component of ctnnb1/beta-catenin-independent frizzled signaling. Required for notochord and head formation. The polypeptide is Dapper 1-B (dact1-b) (Xenopus laevis (African clawed frog)).